The sequence spans 593 residues: Mitoguardin 2 (593 aa).

Transmembrane regions (helical) follow at residues Met11–Gly31 and Pro42–Ala62. 3 disordered regions span residues Pro98–Ser134, Thr150–Gly171, and Val197–Gln229. Composition is skewed to low complexity over residues Ser106 to Ser116 and Ser124 to Ser134. Ser132 carries the phosphoserine modification. The segment covering Ser205 to Thr218 has biased composition (polar residues). A Phosphothreonine modification is found at Thr206. Phosphoserine is present on residues Ser220, Ser224, and Ser228. Thr273 carries the phosphothreonine modification. Phosphoserine is present on residues Ser276 and Ser295. The short motif at Ser292–Glu298 is the FFAT element.

This sequence belongs to the mitoguardin family. In terms of assembly, homodimer and heterodimer; forms heterodimers with MIGA1. Interacts with PLD6/MitoPLD. Interacts (via phosphorylated FFAT motif) with MOSPD2. Phosphorylation at Ser-295 of the FFAT motif activates interaction with MOSPD2.

It is found in the mitochondrion outer membrane. Regulator of mitochondrial fusion. Acts by forming homo- and heterodimers at the mitochondrial outer membrane and facilitating the formation of PLD6/MitoPLD dimers. May act by regulating phospholipid metabolism via PLD6/MitoPLD. The protein is Mitoguardin 2 of Mus musculus (Mouse).